We begin with the raw amino-acid sequence, 236 residues long: Serine/arginine-rich SC35-like splicing factor SCL28 (236 aa).

Disordered regions lie at residues 1–53 and 124–219; these read MARA…LIRN and EENR…RVLT. A compositionally biased stretch (basic and acidic residues) spans 14 to 43; that stretch reads RPRDRSPPRERKGYDDNRLRERPSSRDHES. Residues 47-125 enclose the RRM domain; it reads SGLLIRNLPL…REIAIVFAEE (79 aa). The span at 149–176 shows a compositional bias: basic residues; the sequence is TSHRSPRRRYRSHSRSRSPPRRESRHSK. Position 184 is a phosphoserine (S184). A compositionally biased stretch (basic and acidic residues) spans 199–217; it reads RNEREYKSRNCRSPREERV.

It belongs to the splicing factor SR family. SCL subfamily. Component of the spliceosome. Interacts with RS2Z33, CYP59, CYP63 and CYP95.

It is found in the nucleus speckle. Functionally, involved in intron recognition and spliceosome assembly. Probably active at the 5' splice sites. This chain is Serine/arginine-rich SC35-like splicing factor SCL28 (SCL28), found in Arabidopsis thaliana (Mouse-ear cress).